Consider the following 238-residue polypeptide: Riboflavin synthase (238 aa).

Lumazine-binding repeat units follow at residues 1 to 103 (MFTG…FGGH) and 104 to 205 (YVQG…EKQI). 2,4-dihydroxypteridine is bound by residues 4-6 (GIV), 54-56 (CLT), and 68-73 (GISPET). The residue at position 95 (S95) is a Phosphoserine. Residues 107–109 (GHV), K143, 152–154 (SLT), and 170–175 (SMIKHT) contribute to the 2,4-dihydroxypteridine site.

In terms of assembly, homotrimer.

It carries out the reaction 2 6,7-dimethyl-8-(1-D-ribityl)lumazine + H(+) = 5-amino-6-(D-ribitylamino)uracil + riboflavin. Its pathway is cofactor biosynthesis; riboflavin biosynthesis; riboflavin from 2-hydroxy-3-oxobutyl phosphate and 5-amino-6-(D-ribitylamino)uracil: step 2/2. Functionally, catalyzes the dismutation of two molecules of 6,7-dimethyl-8-ribityllumazine, resulting in the formation of riboflavin and 5-amino-6-(D-ribitylamino)uracil. This chain is Riboflavin synthase, found in Saccharomyces cerevisiae (strain ATCC 204508 / S288c) (Baker's yeast).